Here is a 77-residue protein sequence, read N- to C-terminus: Surfactant-associated protein 2 (77 aa).

An N-terminal signal peptide occupies residues 1-19 (MESLMRLFLLLALLSSSHA). An N-linked (GlcNAc...) asparagine glycan is attached at Asn61.

N-glycosylated. As to expression, expressed in lung, and specifically in alveolar type II epithelial cells.

It localises to the secreted. The protein resides in the cytoplasmic vesicle. It is found in the secretory vesicle. Its subcellular location is the golgi apparatus. Functionally, putative surfactant protein. This Mus musculus (Mouse) protein is Surfactant-associated protein 2.